A 612-amino-acid polypeptide reads, in one-letter code: Baculoviral IAP repeat-containing protein 2 (612 aa).

The stretch at 46 to 113 (ELYRMSTYSA…RQFYPSCSFV (68 aa)) is one BIR 1 repeat. Omega-N-methylarginine is present on R143. S153 bears the Phosphoserine mark. BIR repeat units follow at residues 177-243 (EEAR…CPFL) and 262-329 (HSAR…CEFL). Zn(2+)-binding residues include C299, C302, H319, and C326. Residues 447–537 (MASGDLSLIR…TLYENLFVEK (91 aa)) enclose the CARD domain. Residues 565–600 (CKVCMDREVSIVFIPCGHLVVCQECAPSLRKCPICR) form an RING-type zinc finger.

It belongs to the IAP family. As to quaternary structure, interacts with DIABLO/SMAC and with PRSS25; these interactions inhibit apoptotic suppressor activity. Interacts with CASP9. Interacts (via BIR domains) with TRAF2; the interaction is required for IKBKE ubiquitination. Interacts with E2F1, RIPK1, RIPK2, RIPK3, RIPK4, BIRC5/survivin and USP19. Interacts with HSP90AB1. Interacts with several death receptors, inclusing FAS, TNFRSF10A and TNFRSF10B. Recruited to TNFRSF10B in the absence of receptor stimulation. When TNFRSF10B is stimulated, further recruited to the receptor and cleaved by caspases. Proteolytic fragments remain associated with TNFRSF10B. In terms of processing, auto-ubiquitinated and degraded by the proteasome in apoptotic cells. Post-translationally, upon stimulation of death receptors, including TNFRSF10B, recruited to receptors and cleaved by caspases. Proteolytic fragments remain associated with the receptors. This cleavage presumably inactivates the protein. In terms of tissue distribution, expressed in heart, brain, spleen, lung, liver, skeletal muscle, kidney and testis.

The protein resides in the cytoplasm. Its subcellular location is the nucleus. It catalyses the reaction S-ubiquitinyl-[E2 ubiquitin-conjugating enzyme]-L-cysteine + [acceptor protein]-L-lysine = [E2 ubiquitin-conjugating enzyme]-L-cysteine + N(6)-ubiquitinyl-[acceptor protein]-L-lysine.. With respect to regulation, the CARD domain inhibits the activation of E3 ubiquitin ligase activity by preventing RING domain dimerization and E2 ubiquitin donor binding and activation. The CARD domain-mediated autoinhibition of the E3 ubiquitin-protein ligase activity suppresses cell proliferation and migration. USP19 regulates the stability of BIRC2/c-IAP1 by preventing its ubiquitination. Multi-functional protein which regulates not only caspases and apoptosis, but also modulates inflammatory signaling and immunity, mitogenic kinase signaling, and cell proliferation, as well as cell invasion and metastasis. Acts as an E3 ubiquitin-protein ligase regulating NF-kappa-B signaling and regulates both canonical and non-canonical NF-kappa-B signaling by acting in opposite directions: acts as a positive regulator of the canonical pathway and suppresses constitutive activation of non-canonical NF-kappa-B signaling. The target proteins for its E3 ubiquitin-protein ligase activity include: RIPK1, RIPK2, RIPK3, RIPK4, CASP3, CASP7, CASP8, TRAF2, DIABLO/SMAC, MAP3K14/NIK, MAP3K5/ASK1, IKBKG/NEMO, IKBKE and MXD1/MAD1. Can also function as an E3 ubiquitin-protein ligase of the NEDD8 conjugation pathway, targeting effector caspases for neddylation and inactivation. Acts as an important regulator of innate immune signaling via regulation of Toll-like receptors (TLRs), Nodlike receptors (NLRs) and RIG-I like receptors (RLRs), collectively referred to as pattern recognition receptors (PRRs). Protects cells from spontaneous formation of the ripoptosome, a large multi-protein complex that has the capability to kill cancer cells in a caspase-dependent and caspase-independent manner. Suppresses ripoptosome formation by ubiquitinating RIPK1 and CASP8. Can stimulate the transcriptional activity of E2F1. Plays a role in the modulation of the cell cycle. This is Baculoviral IAP repeat-containing protein 2 (Birc2) from Mus musculus (Mouse).